Consider the following 72-residue polypeptide: Protein RALF-like 20 (72 aa).

The N-terminal stretch at 1 to 27 (MVLSKKTIMQSFALMIILSIVMSTTEA) is a signal peptide. Intrachain disulfides connect C43–C51 and C63–C69.

The protein belongs to the plant rapid alkalinization factor (RALF) family.

The protein resides in the secreted. Cell signaling peptide that may regulate plant stress, growth, and development. Mediates a rapid alkalinization of extracellular space by mediating a transient increase in the cytoplasmic Ca(2+) concentration leading to a calcium-dependent signaling events through a cell surface receptor and a concomitant activation of some intracellular mitogen-activated protein kinases. This Arabidopsis thaliana (Mouse-ear cress) protein is Protein RALF-like 20 (RALFL20).